A 235-amino-acid chain; its full sequence is Ubiquinone biosynthesis O-methyltransferase (235 aa).

The S-adenosyl-L-methionine site is built by R36, G56, D77, and M122.

Belongs to the methyltransferase superfamily. UbiG/COQ3 family.

It carries out the reaction a 3-demethylubiquinol + S-adenosyl-L-methionine = a ubiquinol + S-adenosyl-L-homocysteine + H(+). It catalyses the reaction a 3-(all-trans-polyprenyl)benzene-1,2-diol + S-adenosyl-L-methionine = a 2-methoxy-6-(all-trans-polyprenyl)phenol + S-adenosyl-L-homocysteine + H(+). The protein operates within cofactor biosynthesis; ubiquinone biosynthesis. O-methyltransferase that catalyzes the 2 O-methylation steps in the ubiquinone biosynthetic pathway. This is Ubiquinone biosynthesis O-methyltransferase from Leptothrix cholodnii (strain ATCC 51168 / LMG 8142 / SP-6) (Leptothrix discophora (strain SP-6)).